Reading from the N-terminus, the 455-residue chain is DENN domain-containing protein 11 (455 aa).

V2 is subject to N-acetylvaline. Residues 15–187 form the uDENN domain; sequence EGPAVSVPQD…QLEMPGHYSH (173 aa). The tract at residues 21-61 is disordered; sequence VPQDPALQAGGWVRGGSGGGRVAAEAPRRREPEEPAPPEVL. Residues 32 to 41 show a composition bias toward gly residues; the sequence is WVRGGSGGGR. Omega-N-methylarginine is present on R41. One can recognise a cDENN domain in the interval 214 to 362; the sequence is WLPSIHRYMY…LNSADREKYR (149 aa). One can recognise a dDENN domain in the interval 364–455; sequence LNEQRQMLLY…MLVIDNPCCP (92 aa).

This sequence belongs to the DENND11 family. Expressed within the somatodendritic compartment of neurons, is also present on dendritic growth cones, but is not found in astrocytes.

In terms of biological role, probable guanine nucleotide exchange factor (GEF). May promote the exchange of GDP to GTP, converting inactive GDP-bound small GTPases into their active GTP-bound form. May play a role in neuritogenesis, as well as in neuronal recovery and/or restructuring in the hippocampus following transient cerebral ischemia. In Rattus norvegicus (Rat), this protein is DENN domain-containing protein 11 (Dennd11).